A 41-amino-acid polypeptide reads, in one-letter code: Photosystem II reaction center protein Y (41 aa).

The helical transmembrane segment at 5-23 (VLIVLAPVIIAGSWALFNI) threads the bilayer.

This sequence belongs to the PsbY family. PSII is composed of 1 copy each of membrane proteins PsbA, PsbB, PsbC, PsbD, PsbE, PsbF, PsbH, PsbI, PsbJ, PsbK, PsbL, PsbM, PsbT, PsbX, PsbY, PsbZ, Psb30/Ycf12, peripheral proteins PsbO, CyanoQ (PsbQ), PsbU, PsbV and a large number of cofactors. It forms dimeric complexes.

The protein localises to the cellular thylakoid membrane. In terms of biological role, loosely associated component of the core of photosystem II (PSII), it is not always seen in crystals. PSII is a light-driven water plastoquinone oxidoreductase, using light energy to abstract electrons from H(2)O, generating a proton gradient subsequently used for ATP formation. The protein is Photosystem II reaction center protein Y of Gloeothece citriformis (strain PCC 7424) (Cyanothece sp. (strain PCC 7424)).